Here is a 159-residue protein sequence, read N- to C-terminus: SsrA-binding protein (159 aa).

The protein belongs to the SmpB family.

The protein localises to the cytoplasm. Required for rescue of stalled ribosomes mediated by trans-translation. Binds to transfer-messenger RNA (tmRNA), required for stable association of tmRNA with ribosomes. tmRNA and SmpB together mimic tRNA shape, replacing the anticodon stem-loop with SmpB. tmRNA is encoded by the ssrA gene; the 2 termini fold to resemble tRNA(Ala) and it encodes a 'tag peptide', a short internal open reading frame. During trans-translation Ala-aminoacylated tmRNA acts like a tRNA, entering the A-site of stalled ribosomes, displacing the stalled mRNA. The ribosome then switches to translate the ORF on the tmRNA; the nascent peptide is terminated with the 'tag peptide' encoded by the tmRNA and targeted for degradation. The ribosome is freed to recommence translation, which seems to be the essential function of trans-translation. This Salinispora tropica (strain ATCC BAA-916 / DSM 44818 / JCM 13857 / NBRC 105044 / CNB-440) protein is SsrA-binding protein.